The following is a 549-amino-acid chain: MARDAAKLEATVAKLKKHWAESAPRDMRAAFSADPGRFGRYSLCLDDLLFDWSKCRVNDETMALLKELAVAADVEGRRAAMFAGEHINNTEDRAVLHVALRDTSSKEVLVDGHNVLPDVKHVLDRMAAFADGIRSGALKGATGRKITDIVNIGIGGSDLGPVMATLALAPYHDGPRAHFVSNIDGAHIADTLSPLDPASTLIIVASKTFTTIETMTNAQTARKWVADTLGEAAVGAHFAAVSTALDKVAAFGIPEDRVFGFWDWVGGRYSVWSAIGLPVMIAVGPDNFRKFLAGAHAMDVHFRDAPLEKNLPVMLGLIGYWHRAICGYGSRAIIPYDQRLSRLPAYLQQLDMESNGKSVTLDGKPVSGPTGPVVWGEPGTNGQHAFFQLLHQGTDTIPLEFIVAAKGHEPTLDHQHEMLMANCLAQSEALMKGRTLDEARAQLQAKNLPASQVERIAPHRVFSGNRPSLTLIHDMLDPYALGRLIALYEHRVFVEAQIFGINAFDQWGVELGKELATELLPVVSGKEGASGRDASTQGLVAHLHARRKA.

Glutamate 353 acts as the Proton donor in catalysis. Residues histidine 384 and lysine 513 contribute to the active site.

Belongs to the GPI family.

It localises to the cytoplasm. The enzyme catalyses alpha-D-glucose 6-phosphate = beta-D-fructose 6-phosphate. It participates in carbohydrate biosynthesis; gluconeogenesis. It functions in the pathway carbohydrate degradation; glycolysis; D-glyceraldehyde 3-phosphate and glycerone phosphate from D-glucose: step 2/4. Catalyzes the reversible isomerization of glucose-6-phosphate to fructose-6-phosphate. In Brucella ovis (strain ATCC 25840 / 63/290 / NCTC 10512), this protein is Glucose-6-phosphate isomerase.